The chain runs to 257 residues: Diphthine synthase (257 aa).

S-adenosyl-L-methionine is bound by residues I11, D89, I92, 117-118, L169, L210, and H235; that span reads SV.

Belongs to the diphthine synthase family. Homodimer.

The enzyme catalyses 2-[(3S)-amino-3-carboxypropyl]-L-histidyl-[translation elongation factor 2] + 3 S-adenosyl-L-methionine = diphthine-[translation elongation factor 2] + 3 S-adenosyl-L-homocysteine + 3 H(+). The protein operates within protein modification; peptidyl-diphthamide biosynthesis. S-adenosyl-L-methionine-dependent methyltransferase that catalyzes the trimethylation of the amino group of the modified target histidine residue in translation elongation factor 2 (EF-2), to form an intermediate called diphthine. The three successive methylation reactions represent the second step of diphthamide biosynthesis. This chain is Diphthine synthase, found in Saccharolobus solfataricus (strain ATCC 35092 / DSM 1617 / JCM 11322 / P2) (Sulfolobus solfataricus).